The primary structure comprises 293 residues: Taste receptor type 2 member 143 (293 aa).

Residues methionine 1–threonine 6 are Extracellular-facing. Residues leucine 7–methionine 27 traverse the membrane as a helical segment. The Cytoplasmic segment spans residues methionine 28–arginine 55. The helical transmembrane segment at phenylalanine 56–glutamine 76 threads the bilayer. The Extracellular portion of the chain corresponds to alanine 77–leucine 79. A helical transmembrane segment spans residues isoleucine 80–isoleucine 100. At phenylalanine 101–arginine 127 the chain is on the cytoplasmic side. A helical membrane pass occupies residues leucine 128 to phenylalanine 148. Residues methionine 149–serine 181 are Extracellular-facing. An N-linked (GlcNAc...) asparagine glycan is attached at asparagine 162. Residues valine 182–serine 202 form a helical membrane-spanning segment. The Cytoplasmic portion of the chain corresponds to leucine 203–methionine 227. A helical membrane pass occupies residues alanine 228 to isoleucine 248. The Extracellular portion of the chain corresponds to serine 249–glutamate 264. A helical membrane pass occupies residues alanine 265–leucine 285. Residues arginine 286–phenylalanine 293 are Cytoplasmic-facing.

Belongs to the G-protein coupled receptor T2R family.

The protein localises to the membrane. In terms of biological role, putative taste receptor which may play a role in the perception of bitterness. The sequence is that of Taste receptor type 2 member 143 (Tas2r143) from Mus musculus (Mouse).